Here is a 113-residue protein sequence, read N- to C-terminus: Hydrogenase maturation factor HypA (113 aa).

Histidine 2 is a binding site for Ni(2+). Zn(2+) contacts are provided by cysteine 73, cysteine 75, cysteine 89, and cysteine 92.

It belongs to the HypA/HybF family.

In terms of biological role, involved in the maturation of [NiFe] hydrogenases. Required for nickel insertion into the metal center of the hydrogenase. In Methanocella arvoryzae (strain DSM 22066 / NBRC 105507 / MRE50), this protein is Hydrogenase maturation factor HypA.